Reading from the N-terminus, the 371-residue chain is uncharacterized protein (371 aa).

It belongs to the Gfo/Idh/MocA family.

This is an uncharacterized protein from Synechocystis sp. (strain ATCC 27184 / PCC 6803 / Kazusa).